The following is a 377-amino-acid chain: Proteinase-activated receptor 3 (377 aa).

The N-terminal stretch at 1-19 (MRAAIFAAIGALLLSPASC) is a signal peptide. Residues 20 to 38 (QSGMEYDADNLAKPTLSIK) constitute a propeptide, removed for receptor activation. The Extracellular portion of the chain corresponds to 39-94 (TFRGAPQNSFEEFPLSAIEGWTGTTKTVKIKCPEELDSNLHVNNATMGYLSSPLST). A glycan (N-linked (GlcNAc...) asparagine) is linked at Asn82. A helical transmembrane segment spans residues 95–120 (KLIPAIYILVFAVGMPANAVTLWMLF). Residues 121-127 (RTRTIRM) are Cytoplasmic-facing. Residues 128–147 (TIFYTNLAIADFLFCVTLPF) form a helical membrane-spanning segment. At 148 to 166 (RIAYHLNGNNWVFGEVMCR) the chain is on the extracellular side. Cysteines 165 and 244 form a disulfide. Residues 167-188 (ATTVIFYGNMYCSILLLACISI) form a helical membrane-spanning segment. Over 189 to 205 (NRYLAIVHPFTYRGLPK) the chain is Cytoplasmic. The helical transmembrane segment at 206-229 (RTYALLTCGLVWTTVFLYMLPFFI) threads the bilayer. Over 230 to 259 (LKQEYYLVQQDITTCHDVHNTCESSSPFQL) the chain is Extracellular. A helical transmembrane segment spans residues 260-279 (YYFISLAFFGFLIPFLVIIY). Topologically, residues 280–296 (CYTAIIWTLNAKDRRWL) are cytoplasmic. A helical membrane pass occupies residues 297-321 (WYIKASLLTFVIFTICFAPSNIILI). Residues 322 to 335 (IHHANYYYSNTDAL) lie on the Extracellular side of the membrane. A helical membrane pass occupies residues 336–360 (YFVYLIALCLGSLNSCLDPFLYFLM). Topologically, residues 361 to 377 (SKITDHSTAYLTMVKLS) are cytoplasmic.

It belongs to the G-protein coupled receptor 1 family. In terms of assembly, interacts with INSC/inscuteable and GPSM2. In terms of processing, a proteolytic cleavage generates a new N-terminus that functions as a tethered ligand.

It localises to the cell membrane. Functionally, receptor for activated thrombin coupled to G proteins that stimulate phosphoinositide hydrolysis. The protein is Proteinase-activated receptor 3 (F2RL2) of Bos taurus (Bovine).